Reading from the N-terminus, the 251-residue chain is MSAGRLNKKSLGIVMLLSVGLLLAGCSGSKSSDTGTYSGSVYTVKRGDTLYRISRTTGTSVKELARLNGISPPYTIEVGQKLKLGGAKSSSITRKSTAKSTTKTASVTPSSAVPKSSWPPVGQRCWLWPTTGKVIMPYSTADGGNKGIDISAPRGTPIYAAGAGKVVYVGNQLRGYGNLIMIKHSEDYITAYAHNDTMLVNNGQSVKAGQKIATMGSTDAASVRLHFQIRYRATAIDPLRYLPPQGSKPKC.

A signal peptide spans 1–25 (MSAGRLNKKSLGIVMLLSVGLLLAG). Cys26 is lipidated: N-palmitoyl cysteine. Cys26 carries the S-diacylglycerol cysteine lipid modification. A LysM domain is found at 40–84 (SVYTVKRGDTLYRISRTTGTSVKELARLNGISPPYTIEVGQKLKL). The span at 93-112 (TRKSTAKSTTKTASVTPSSA) shows a compositional bias: low complexity. Residues 93-115 (TRKSTAKSTTKTASVTPSSAVPK) are disordered.

This sequence belongs to the peptidase M23B family.

The protein localises to the cell inner membrane. This is an uncharacterized protein from Escherichia coli (strain K12).